Consider the following 189-residue polypeptide: Large ribosomal subunit protein uL5 (189 aa).

It belongs to the universal ribosomal protein uL5 family. Part of the 50S ribosomal subunit; part of the 5S rRNA/L5/L18/L25 subcomplex. Contacts the 5S rRNA and the P site tRNA. Forms a bridge to the 30S subunit in the 70S ribosome.

In terms of biological role, this is one of the proteins that bind and probably mediate the attachment of the 5S RNA into the large ribosomal subunit, where it forms part of the central protuberance. In the 70S ribosome it contacts protein S13 of the 30S subunit (bridge B1b), connecting the 2 subunits; this bridge is implicated in subunit movement. Contacts the P site tRNA; the 5S rRNA and some of its associated proteins might help stabilize positioning of ribosome-bound tRNAs. This Corynebacterium jeikeium (strain K411) protein is Large ribosomal subunit protein uL5.